The primary structure comprises 300 residues: Sulfate adenylyltransferase subunit 2 (300 aa).

This sequence belongs to the PAPS reductase family. CysD subfamily. As to quaternary structure, heterodimer composed of CysD, the smaller subunit, and CysN.

It carries out the reaction sulfate + ATP + H(+) = adenosine 5'-phosphosulfate + diphosphate. It participates in sulfur metabolism; hydrogen sulfide biosynthesis; sulfite from sulfate: step 1/3. In terms of biological role, with CysN forms the ATP sulfurylase (ATPS) that catalyzes the adenylation of sulfate producing adenosine 5'-phosphosulfate (APS) and diphosphate, the first enzymatic step in sulfur assimilation pathway. APS synthesis involves the formation of a high-energy phosphoric-sulfuric acid anhydride bond driven by GTP hydrolysis by CysN coupled to ATP hydrolysis by CysD. The sequence is that of Sulfate adenylyltransferase subunit 2 from Magnetococcus marinus (strain ATCC BAA-1437 / JCM 17883 / MC-1).